We begin with the raw amino-acid sequence, 1437 residues long: CRISPR-associated endoribonuclease Cas13a (1437 aa).

2 HEPN-like fold regions span residues 460–626 (LNAS…AMFE) and 1101–1437 (EFRD…QLKN). The tract at residues 1377 to 1419 (EVKEKKKPSDNNTGKGYSKRDRQQDRKEYDKYKEKKKKEGNFL) is disordered. The segment covering 1394–1416 (SKRDRQQDRKEYDKYKEKKKKEG) has biased composition (basic and acidic residues).

It belongs to the CRISPR-associated endoribonuclease Cas13a family. It depends on a divalent metal cation as a cofactor.

Its activity is regulated as follows. Target RNA acts as an activator for non-specific ssRNA degradation. Its function is as follows. CRISPR (clustered regularly interspaced short palindromic repeat), is an adaptive immune system that provides protection against mobile genetic elements (viruses, transposable elements and conjugative plasmids). CRISPR clusters contain sequences complementary to antecedent mobile elements and target invading nucleic acids. Unlike many single-component effectors, this CRISPR-Cas system targets RNA. CRISPR clusters are transcribed from pre-CRISPR RNA (crRNA) and processed into crRNA by this protein. Cleaves linear target ssRNA in a pre-crRNA-dependent fashion, preferentially around A residues. Binding a viable target RNA target activates this protein for non-specific RNA degradation in vitro (called collateral RNA degradation), but it is not very sensitive as it requires nanomolar levels of viable target RNA. In Lachnospiraceae bacterium (strain NK4A179), this protein is CRISPR-associated endoribonuclease Cas13a.